The following is a 446-amino-acid chain: tRNA-2-methylthio-N(6)-dimethylallyladenosine synthase (446 aa).

The MTTase N-terminal domain maps to lysine 2–glutamate 122. Residues cysteine 11, cysteine 47, cysteine 85, cysteine 157, cysteine 161, and cysteine 164 each contribute to the [4Fe-4S] cluster site. The region spanning arginine 143–alanine 375 is the Radical SAM core domain. The TRAM domain maps to alanine 378–glutamate 440.

The protein belongs to the methylthiotransferase family. MiaB subfamily. As to quaternary structure, monomer. [4Fe-4S] cluster is required as a cofactor.

It is found in the cytoplasm. The enzyme catalyses N(6)-dimethylallyladenosine(37) in tRNA + (sulfur carrier)-SH + AH2 + 2 S-adenosyl-L-methionine = 2-methylsulfanyl-N(6)-dimethylallyladenosine(37) in tRNA + (sulfur carrier)-H + 5'-deoxyadenosine + L-methionine + A + S-adenosyl-L-homocysteine + 2 H(+). Catalyzes the methylthiolation of N6-(dimethylallyl)adenosine (i(6)A), leading to the formation of 2-methylthio-N6-(dimethylallyl)adenosine (ms(2)i(6)A) at position 37 in tRNAs that read codons beginning with uridine. The protein is tRNA-2-methylthio-N(6)-dimethylallyladenosine synthase of Methylorubrum extorquens (strain CM4 / NCIMB 13688) (Methylobacterium extorquens).